Reading from the N-terminus, the 142-residue chain is Large ribosomal subunit protein uL13 (142 aa).

It belongs to the universal ribosomal protein uL13 family. In terms of assembly, part of the 50S ribosomal subunit.

Its function is as follows. This protein is one of the early assembly proteins of the 50S ribosomal subunit, although it is not seen to bind rRNA by itself. It is important during the early stages of 50S assembly. The polypeptide is Large ribosomal subunit protein uL13 (Stutzerimonas stutzeri (strain A1501) (Pseudomonas stutzeri)).